A 223-amino-acid chain; its full sequence is Deoxyribose-phosphate aldolase (223 aa).

Catalysis depends on Asp-92, which acts as the Proton donor/acceptor. Catalysis depends on Lys-158, which acts as the Schiff-base intermediate with acetaldehyde. The Proton donor/acceptor role is filled by Lys-188.

It belongs to the DeoC/FbaB aldolase family. DeoC type 1 subfamily.

It is found in the cytoplasm. It catalyses the reaction 2-deoxy-D-ribose 5-phosphate = D-glyceraldehyde 3-phosphate + acetaldehyde. It participates in carbohydrate degradation; 2-deoxy-D-ribose 1-phosphate degradation; D-glyceraldehyde 3-phosphate and acetaldehyde from 2-deoxy-alpha-D-ribose 1-phosphate: step 2/2. In terms of biological role, catalyzes a reversible aldol reaction between acetaldehyde and D-glyceraldehyde 3-phosphate to generate 2-deoxy-D-ribose 5-phosphate. The polypeptide is Deoxyribose-phosphate aldolase (Mycolicibacterium paratuberculosis (strain ATCC BAA-968 / K-10) (Mycobacterium paratuberculosis)).